The primary structure comprises 421 residues: Protein ECERIFERUM 2 (421 aa).

M1 is modified (N-acetylmethionine).

The protein belongs to the plant acyltransferase family. Expressed at high levels in the epidermis of stems and young siliques. Expressed in flowers.

The protein resides in the endoplasmic reticulum. Its subcellular location is the nucleus. Functionally, involved in biosynthesis of the epicuticular wax. Plays a role in very-long-chain fatty acid (VLCFA) biosynthesis and is required for C28 fatty acid elongation in stem. Despite its classification as a BAHD acyltransferase based on sequence homology, CER2 does not seem to share the catalytic mechanism of the members of the BAHD family. The sequence is that of Protein ECERIFERUM 2 (CER2) from Arabidopsis thaliana (Mouse-ear cress).